A 129-amino-acid chain; its full sequence is NHP2-like protein 1 homolog (129 aa).

This sequence belongs to the eukaryotic ribosomal protein eL8 family.

The protein localises to the nucleus. It is found in the nucleolus. Binds to the 5'-stem-loop of U4 snRNA and may play a role in the late stage of spliceosome assembly. The protein undergoes a conformational change upon RNA-binding. The protein is NHP2-like protein 1 homolog of Dictyostelium discoideum (Social amoeba).